We begin with the raw amino-acid sequence, 2664 residues long: Non-reducing polyketide synthase sorB (2664 aa).

The segment at 21 to 45 (KSAPQSGNTADDIPNAASQPDTTST) is disordered. A compositionally biased stretch (polar residues) spans 36–45 (AASQPDTTST). The segment at 112–281 (ADHARRLAEW…TTPSRIASDL (170 aa)) is N-terminal acylcarrier protein transacylase domain (SAT). Residue cysteine 184 is the Nucleophile; for transacylase activity of the active site. Histidine 302 functions as the Proton donor/acceptor; for transacylase activity in the catalytic mechanism. Residues 428-849 (DNDIAVIGMS…GSNASMVIKQ (422 aa)) form the Ketosynthase family 3 (KS3) domain. Residues cysteine 596, histidine 731, and histidine 772 each act as for beta-ketoacyl synthase activity in the active site. The tract at residues 961 to 1276 (CFGGQVSKSV…TQGTRQLADV (316 aa)) is malonyl-CoA:ACP transacylase (MAT) domain. Positions 1345–1477 (PGLYTFMGYG…GQLEFHRADD (133 aa)) are N-terminal hotdog fold. Residues 1345–1663 (PGLYTFMGYG…FSARSMSELF (319 aa)) enclose the PKS/mFAS DH domain. The tract at residues 1376–1548 (VSGYTLGKTV…PSESAGRAVK (173 aa)) is product template (PT) domain. A C-terminal hotdog fold region spans residues 1507–1663 (DEVIQGQSIY…FSARSMSELF (157 aa)). Positions 1711–1785 (TELWAKLLPV…GILAFLQSTL (75 aa)) constitute a Carrier domain. O-(pantetheine 4'-phosphoryl)serine is present on serine 1745. The segment at 1789–1820 (GEDDASQSSDAASSSRNTPPSSNDGILATPSP) is disordered. Residues 1794 to 1803 (SQSSDAASSS) show a composition bias toward low complexity. Residues 2015–2197 (FQLMADFLSR…DAGYKHVEWT (183 aa)) are methyltransferase domain. The NADPH-binding (R) domain stretch occupies residues 2281-2526 (VTGTTGSLGS…TLRSFPAVEG (246 aa)).

The cofactor is pantetheine 4'-phosphate.

The protein operates within secondary metabolite biosynthesis. Its function is as follows. Non-reducing polyketide synthase; part of the gene cluster that mediates the biosynthesis of sorbicillinoids, a diverse group of yellow secondary metabolites that restrict growth of competing pathogenic fungi but not of bacteria. Sorbicillinoids biosynthesis requires the action of two PKSs. SorA iteratively combines three acetyl units and the growing chain is modified by the ketoacyl reductase subunit, and optional by the enoyl reductase subunit in the second cycle. The polyketide is then handed over to the PKS SorB, which adds three more acetyl units, and two methyl groups. SorB releases an aldehyde, which undergoes spontaneous cyclization resulting in the formation of sorbicillin or 2',3'-dihydrosorbicillin. The monooxygenase sorC oxidizes sorbicillin and 2',3'-dihydrosorbicillin to 2',3'-dihydrosorbicillinol and sorbicillinol, respectively. The oxidoreductase sorD further converts sorbicillinol into oxosorbicillinol. Sorbicillinol is the building block for the other sorbicillinoids such as disorbicillinol, bisvertinolon, and dihydrobisvertinolone. The sequence is that of Non-reducing polyketide synthase sorB from Penicillium rubens (strain ATCC 28089 / DSM 1075 / NRRL 1951 / Wisconsin 54-1255) (Penicillium chrysogenum).